The sequence spans 444 residues: Probable glycine dehydrogenase (decarboxylating) subunit 1 (444 aa).

This sequence belongs to the GcvP family. N-terminal subunit subfamily. The glycine cleavage system is composed of four proteins: P, T, L and H. In this organism, the P 'protein' is a heterodimer of two subunits.

The enzyme catalyses N(6)-[(R)-lipoyl]-L-lysyl-[glycine-cleavage complex H protein] + glycine + H(+) = N(6)-[(R)-S(8)-aminomethyldihydrolipoyl]-L-lysyl-[glycine-cleavage complex H protein] + CO2. Its function is as follows. The glycine cleavage system catalyzes the degradation of glycine. The P protein binds the alpha-amino group of glycine through its pyridoxal phosphate cofactor; CO(2) is released and the remaining methylamine moiety is then transferred to the lipoamide cofactor of the H protein. This Chlorobium luteolum (strain DSM 273 / BCRC 81028 / 2530) (Pelodictyon luteolum) protein is Probable glycine dehydrogenase (decarboxylating) subunit 1.